The following is a 145-amino-acid chain: 3-dehydroquinate dehydratase (145 aa).

Catalysis depends on Tyr-23, which acts as the Proton acceptor. Residues Asn-73, His-79, and Asp-86 each coordinate substrate. The Proton donor role is filled by His-99. Residues 100–101 (LS) and Arg-110 contribute to the substrate site.

This sequence belongs to the type-II 3-dehydroquinase family. As to quaternary structure, homododecamer.

It catalyses the reaction 3-dehydroquinate = 3-dehydroshikimate + H2O. The protein operates within metabolic intermediate biosynthesis; chorismate biosynthesis; chorismate from D-erythrose 4-phosphate and phosphoenolpyruvate: step 3/7. Catalyzes a trans-dehydration via an enolate intermediate. The protein is 3-dehydroquinate dehydratase of Desulfitobacterium hafniense (strain DSM 10664 / DCB-2).